Reading from the N-terminus, the 270-residue chain is Protein-ADP-ribose hydrolase (270 aa).

The 195-residue stretch at 73 to 267 folds into the Macro domain; that stretch reads VSVKDCQKTN…LYDTYLQKEN (195 aa). ADP-D-ribose is bound by residues aspartate 92, isoleucine 93, and asparagine 106. Cysteine 112, histidine 117, and cysteine 119 together coordinate Zn(2+). Residues cysteine 119, isoleucine 120, aspartate 121, serine 212, threonine 213, glycine 214, glutamate 215, and phenylalanine 216 each contribute to the ADP-D-ribose site.

Belongs to the MacroD-type family. Zn-Macro subfamily. Zn(2+) is required as a cofactor.

The enzyme catalyses 4-O-(ADP-D-ribosyl)-L-aspartyl-[protein] + H2O = L-aspartyl-[protein] + ADP-D-ribose + H(+). ADP-ribosylhydrolase that specifically reverses the SirTM-mediated mono-ADP-ribosylation at an asparatate residue of GcvH-L, by releasing ADP-ribose from the target protein. May play a role in the regulation of the response to host-induced oxidative stress. This chain is Protein-ADP-ribose hydrolase, found in Streptococcus pyogenes serotype M6 (strain ATCC BAA-946 / MGAS10394).